A 381-amino-acid polypeptide reads, in one-letter code: Probable tRNA sulfurtransferase (381 aa).

The region spanning 55-163 (GECLENLNKV…DDEAFIYHEK (109 aa)) is the THUMP domain. Residues 181-182 (LV), lysine 265, glycine 287, and glutamine 296 each bind ATP.

The protein belongs to the ThiI family.

The protein localises to the cytoplasm. The enzyme catalyses [ThiI sulfur-carrier protein]-S-sulfanyl-L-cysteine + a uridine in tRNA + 2 reduced [2Fe-2S]-[ferredoxin] + ATP + H(+) = [ThiI sulfur-carrier protein]-L-cysteine + a 4-thiouridine in tRNA + 2 oxidized [2Fe-2S]-[ferredoxin] + AMP + diphosphate. The catalysed reaction is [ThiS sulfur-carrier protein]-C-terminal Gly-Gly-AMP + S-sulfanyl-L-cysteinyl-[cysteine desulfurase] + AH2 = [ThiS sulfur-carrier protein]-C-terminal-Gly-aminoethanethioate + L-cysteinyl-[cysteine desulfurase] + A + AMP + 2 H(+). Its pathway is cofactor biosynthesis; thiamine diphosphate biosynthesis. In terms of biological role, catalyzes the ATP-dependent transfer of a sulfur to tRNA to produce 4-thiouridine in position 8 of tRNAs, which functions as a near-UV photosensor. Also catalyzes the transfer of sulfur to the sulfur carrier protein ThiS, forming ThiS-thiocarboxylate. This is a step in the synthesis of thiazole, in the thiamine biosynthesis pathway. The sulfur is donated as persulfide by IscS. In Methanobrevibacter smithii (strain ATCC 35061 / DSM 861 / OCM 144 / PS), this protein is Probable tRNA sulfurtransferase.